A 389-amino-acid chain; its full sequence is Probable inactive purple acid phosphatase 29 (389 aa).

A signal peptide spans 1-34 (MADNRRRRSLFDFLLFSVFLGLACLCLSPIPATA). Asn80 carries N-linked (GlcNAc...) asparagine glycosylation. Asn136 contributes to the substrate binding site. Asn136 serves as a coordination point for Zn(2+). N-linked (GlcNAc...) asparagine glycosylation is found at Asn191 and Asn267. Residue His303 coordinates Zn(2+). Position 303-305 (303-305 (HDH)) interacts with substrate. Fe cation is bound at residue His305. A glycan (N-linked (GlcNAc...) asparagine) is linked at Asn380.

This sequence belongs to the metallophosphoesterase superfamily. Purple acid phosphatase family. In terms of assembly, homodimer. Requires Fe cation as cofactor. Zn(2+) serves as cofactor. In terms of tissue distribution, expressed in roots, stems, leaves, flowers and siliques.

The protein localises to the secreted. This chain is Probable inactive purple acid phosphatase 29 (PAP29), found in Arabidopsis thaliana (Mouse-ear cress).